The sequence spans 467 residues: Hydroxymethylglutaryl-CoA synthase erg13A (467 aa).

Alanine 35 provides a ligand contact to (3S)-3-hydroxy-3-methylglutaryl-CoA. The Proton donor/acceptor role is filled by glutamate 86. 7 residues coordinate (3S)-3-hydroxy-3-methylglutaryl-CoA: cysteine 118, threonine 160, serine 209, histidine 259, lysine 268, asparagine 334, and serine 368. Cysteine 118 (acyl-thioester intermediate) is an active-site residue. Histidine 259 serves as the catalytic Proton donor/acceptor.

Belongs to the thiolase-like superfamily. HMG-CoA synthase family.

It catalyses the reaction acetoacetyl-CoA + acetyl-CoA + H2O = (3S)-3-hydroxy-3-methylglutaryl-CoA + CoA + H(+). The protein operates within metabolic intermediate biosynthesis; (R)-mevalonate biosynthesis; (R)-mevalonate from acetyl-CoA: step 2/3. Its function is as follows. Hydroxymethylglutaryl-CoA synthase; part of the first module of ergosterol biosynthesis pathway that includes the early steps of the pathway, conserved across all eukaryotes, and which results in the formation of mevalonate from acetyl-coenzyme A (acetyl-CoA). Erg13A and erg13B condense acetyl-CoA with acetoacetyl-CoA to form hydroxymethylglutaryl-CoA (HMG-CoA). The first module starts with the action of the cytosolic acetyl-CoA acetyltransferase erg10B that catalyzes the formation of acetoacetyl-CoA. The hydroxymethylglutaryl-CoA synthases erg13A and erg13B then condense acetyl-CoA with acetoacetyl-CoA to form HMG-CoA. The rate-limiting step of the early module is the reduction to mevalonate by the 3-hydroxy-3-methylglutaryl-coenzyme A (HMG-CoA) reductases hmg1 and hmg2. Mevalonate is also a precursor for the extracellular siderophore triacetylfusarinine C (TAFC). This is Hydroxymethylglutaryl-CoA synthase erg13A from Aspergillus fumigatus (strain ATCC MYA-4609 / CBS 101355 / FGSC A1100 / Af293) (Neosartorya fumigata).